Here is a 161-residue protein sequence, read N- to C-terminus: NAD(P)H-quinone oxidoreductase subunit I, chloroplastic (161 aa).

4Fe-4S ferredoxin-type domains are found at residues 55–84 and 95–124; these read GRIH…VDWK and LNYS…MTEE. Residues cysteine 64, cysteine 67, cysteine 70, cysteine 74, cysteine 104, cysteine 107, cysteine 110, and cysteine 114 each contribute to the [4Fe-4S] cluster site.

This sequence belongs to the complex I 23 kDa subunit family. NDH is composed of at least 16 different subunits, 5 of which are encoded in the nucleus. It depends on [4Fe-4S] cluster as a cofactor.

It localises to the plastid. It is found in the chloroplast thylakoid membrane. It carries out the reaction a plastoquinone + NADH + (n+1) H(+)(in) = a plastoquinol + NAD(+) + n H(+)(out). It catalyses the reaction a plastoquinone + NADPH + (n+1) H(+)(in) = a plastoquinol + NADP(+) + n H(+)(out). In terms of biological role, NDH shuttles electrons from NAD(P)H:plastoquinone, via FMN and iron-sulfur (Fe-S) centers, to quinones in the photosynthetic chain and possibly in a chloroplast respiratory chain. The immediate electron acceptor for the enzyme in this species is believed to be plastoquinone. Couples the redox reaction to proton translocation, and thus conserves the redox energy in a proton gradient. This Phaseolus vulgaris (Kidney bean) protein is NAD(P)H-quinone oxidoreductase subunit I, chloroplastic.